We begin with the raw amino-acid sequence, 335 residues long: Putative hydrogenase expression/formation protein MJ0676 (335 aa).

The protein belongs to the HypE family.

This chain is Putative hydrogenase expression/formation protein MJ0676, found in Methanocaldococcus jannaschii (strain ATCC 43067 / DSM 2661 / JAL-1 / JCM 10045 / NBRC 100440) (Methanococcus jannaschii).